A 200-amino-acid chain; its full sequence is Claudin-11 (200 aa).

M1 is a topological domain (cytoplasmic). A helical transmembrane segment spans residues 2 to 22 (VATCLQVVGFVTSFVGWIGVI). The Extracellular segment spans residues 23–75 (VTTSTNDWVVTCGYTIPTCRKLDELGSKGLWADCVMATGLYHCKPLVDILPCR). A helical transmembrane segment spans residues 76–96 (ALMIAASVLGLPAILLLLTVL). Topologically, residues 97-115 (PCIRMGQEPGVAKYRRAQL) are cytoplasmic. The helical transmembrane segment at 116–136 (AGVLLILLALCAIVATIWFPV) threads the bilayer. Over 137–150 (CAHRETTIVSFGYS) the chain is Extracellular. A helical membrane pass occupies residues 151–171 (LYAGWIGAVLCLVGGCVILCC). Over 172–200 (AGDAQAFGENRFYYTAGSSSPTHAKSAHV) the chain is Cytoplasmic. 2 positions are modified to phosphoserine: S190 and S191.

This sequence belongs to the claudin family. Interacts with tetraspanin-3/TSPAN3. Interacts with OCLN.

It is found in the cell junction. The protein resides in the tight junction. It localises to the cell membrane. Its function is as follows. Plays a major role in tight junction-specific obliteration of the intercellular space, through calcium-independent cell-adhesion activity. The polypeptide is Claudin-11 (CLDN11) (Pongo abelii (Sumatran orangutan)).